Here is a 513-residue protein sequence, read N- to C-terminus: Melianol synthase CYP71BQ4 (513 aa).

A helical membrane pass occupies residues 10–30; that stretch reads MLHLPSLPVLLSFLLFLLMLI. Cys451 provides a ligand contact to heme.

Belongs to the cytochrome P450 family. Requires heme as cofactor. As to expression, accumulates in mature fruits and in juice vesicles.

Its subcellular location is the membrane. It catalyses the reaction dihydroniloticin + 2 reduced [NADPH--hemoprotein reductase] + 2 O2 = melianol + 2 oxidized [NADPH--hemoprotein reductase] + 3 H2O + 2 H(+). It functions in the pathway secondary metabolite biosynthesis; terpenoid biosynthesis. Functionally, monooxygenase involved in the biosynthesis of limonoids triterpene natural products such as limonin, a compound with insecticidal activity responsible for the bitter taste in citrus. Catalyzes the conversion of dihydroniloticin to the protolimonoid melianol. This chain is Melianol synthase CYP71BQ4, found in Citrus sinensis (Sweet orange).